Reading from the N-terminus, the 183-residue chain is Bifunctional protein PyrR (183 aa).

The PRPP-binding signature appears at 102–114 (VVLVDDVLYTGRT).

Belongs to the purine/pyrimidine phosphoribosyltransferase family. PyrR subfamily. Homodimer and homohexamer; in equilibrium.

It catalyses the reaction UMP + diphosphate = 5-phospho-alpha-D-ribose 1-diphosphate + uracil. Functionally, regulates transcriptional attenuation of the pyrimidine nucleotide (pyr) operon by binding in a uridine-dependent manner to specific sites on pyr mRNA. This disrupts an antiterminator hairpin in the RNA and favors formation of a downstream transcription terminator, leading to a reduced expression of downstream genes. Its function is as follows. Also displays a weak uracil phosphoribosyltransferase activity which is not physiologically significant. The protein is Bifunctional protein PyrR of Listeria monocytogenes serotype 4a (strain HCC23).